The primary structure comprises 136 residues: Small ribosomal subunit protein uS9 (136 aa).

Belongs to the universal ribosomal protein uS9 family.

This chain is Small ribosomal subunit protein uS9, found in Borreliella burgdorferi (strain ZS7) (Borrelia burgdorferi).